Reading from the N-terminus, the 1415-residue chain is Uveal autoantigen with coiled-coil domains and ankyrin repeats (1415 aa).

5 ANK repeats span residues E69–T98, A102–H131, Q135–A164, D168–S197, and Q201–L230. Positions V288–K376 form a coiled coil. An ANK 6 repeat occupies E617–V646. Residues T759–A1381 adopt a coiled-coil conformation. Residue K1034 forms a Glycyl lysine isopeptide (Lys-Gly) (interchain with G-Cter in SUMO2) linkage. The span at L1186–S1201 shows a compositional bias: basic and acidic residues. The interval L1186 to S1205 is disordered.

As to quaternary structure, component of the apoptosome complex, composed of APAF1, pro-caspase-9 and UACA. In the complex, it probably interacts directly with APAF1. Interacts with LGALS3, ARF6 and ACTB. Interacts with RAB39A. Highly expressed in adrenal, testis, kidney and large intestine.

Its subcellular location is the nucleus. It is found in the cytoplasm. The protein resides in the cytoskeleton. Regulates APAF1 expression and plays an important role in the regulation of stress-induced apoptosis. Promotes apoptosis by regulating three pathways, apoptosome up-regulation, LGALS3/galectin-3 down-regulation and NF-kappa-B inactivation. Regulates the redistribution of APAF1 into the nucleus after proapoptotic stress. Down-regulates the expression of LGALS3 by inhibiting NFKB1. Its function is as follows. Modulates isoactin dynamics to regulate the morphological alterations required for cell growth and motility. Interaction with ARF6 may modulate cell shape and motility after injury. May be involved in multiple neurite formation. The chain is Uveal autoantigen with coiled-coil domains and ankyrin repeats (UACA) from Canis lupus familiaris (Dog).